The primary structure comprises 369 residues: Coiled-coil domain-containing protein 130 homolog (369 aa).

A compositionally biased stretch (basic and acidic residues) spans 233–263 (TRYRDTKTHDDHLESSRDRIESRRIFRRPEE). The tract at residues 233–369 (TRYRDTKTHD…EYGNSSDDSD (137 aa)) is disordered. A compositionally biased stretch (low complexity) spans 266 to 282 (TPSTSSGSSGGAVPSAS). Residues 283-297 (ERLKATMKAERDKRI) are compositionally biased toward basic and acidic residues. The span at 299-310 (ASFSTAGTSSAT) shows a compositional bias: low complexity.

This sequence belongs to the CWC16 family.

In Caenorhabditis elegans, this protein is Coiled-coil domain-containing protein 130 homolog.